The following is a 347-amino-acid chain: Heme A synthase (347 aa).

The next 8 helical transmembrane spans lie at 14–34 (VKVWLCICSIGILLMVLVGGI), 95–115 (YFHRLLGRIVGLIFLLPFLYF), 125–145 (LIVNFIIICVLILFQGVMGWL), 166–186 (LLLALLIFYLLWRQFLSAVIL), 198–218 (LIFYVISILIVIQITFGSLVA), 260–280 (FIHEVIAVLILVIVSATLLIL), 289–309 (LLLVCLLIQLTFGILTFIYNV), and 311–331 (IALASLHQVTAFILFAINTYL). His262 is a heme binding site. Residue His317 participates in heme binding.

The protein belongs to the COX15/CtaA family. Type 2 subfamily. As to quaternary structure, interacts with CtaB. Requires heme b as cofactor.

Its subcellular location is the cell membrane. It catalyses the reaction Fe(II)-heme o + 2 A + H2O = Fe(II)-heme a + 2 AH2. It participates in porphyrin-containing compound metabolism; heme A biosynthesis; heme A from heme O: step 1/1. Its function is as follows. Catalyzes the conversion of heme O to heme A by two successive hydroxylations of the methyl group at C8. The first hydroxylation forms heme I, the second hydroxylation results in an unstable dihydroxymethyl group, which spontaneously dehydrates, resulting in the formyl group of heme A. This Ehrlichia canis (strain Jake) protein is Heme A synthase.